A 507-amino-acid polypeptide reads, in one-letter code: MLHNYDDFGGGKMQGAPQVPRNTLLSVDQQLQLMNTINNMVRASQFTSQLANTIFTLCAQLKTSGSMLEQSHKNELNKVFTSLRQACCRDNGQLGTPCRLKIMELVELRAMNWRTNLAHSQYYVNRPEGQHDPAPTVGIPPSATSPPTQVTSSVTSPVPSSPQPPMQFVPQNPMMFQDPMAANHNAGGIFFIPAASTWMNPLMPMPPNPFLPHSMIPPDHQMFLRQRSLNKKPNNLMNKTLQLRHEMIIRNSDSGKIMGVKGRRVAAVEQLTNTVISFQKVDSKSKERTLTITASTMEDIERAKDMIIDTIRRNMSPMRTDMSIPPPNQYSGMSSENQSIPSQQNTANIDEDDDDDDEDIKLEQTSDGKLTFHCDDPELLAAAQEALSAYLRVRARPSAEEREKKKERRKSMPLQQTARDQQEPVMLKPAKTFHGSTPNLADGLAATTTVVVASIPQPMVPNVHASGDNPIRYNRDTLMTARDTKRAPIPDEMLQEINRVAPDILIA.

The interval 126-163 (RPEGQHDPAPTVGIPPSATSPPTQVTSSVTSPVPSSPQ) is disordered. The span at 140 to 158 (PPSATSPPTQVTSSVTSPV) shows a compositional bias: low complexity. Residues 242–307 (QLRHEMIIRN…EDIERAKDMI (66 aa)) enclose the KH domain. Disordered regions lie at residues 314 to 360 (NMSP…DEDI) and 395 to 424 (ARPS…QQEP). A compositionally biased stretch (polar residues) spans 329–348 (QYSGMSSENQSIPSQQNTAN). Residues 349-360 (IDEDDDDDDEDI) show a composition bias toward acidic residues.

Interacts with eukaryotic translation initiation factor ife-3.

The protein localises to the cytoplasm. Functionally, plays a role in promoting translation. This is Eukaryotic translation initiation factor 4E-binding protein Mextli homolog from Caenorhabditis elegans.